A 268-amino-acid chain; its full sequence is GTP cyclohydrolase FolE2 (268 aa).

The protein belongs to the GTP cyclohydrolase IV family.

It carries out the reaction GTP + H2O = 7,8-dihydroneopterin 3'-triphosphate + formate + H(+). The protein operates within cofactor biosynthesis; 7,8-dihydroneopterin triphosphate biosynthesis; 7,8-dihydroneopterin triphosphate from GTP: step 1/1. Functionally, converts GTP to 7,8-dihydroneopterin triphosphate. The chain is GTP cyclohydrolase FolE2 from Ralstonia nicotianae (strain ATCC BAA-1114 / GMI1000) (Ralstonia solanacearum).